We begin with the raw amino-acid sequence, 289 residues long: Thiazole synthase (289 aa).

Residue Lys-132 is the Schiff-base intermediate with DXP of the active site. 1-deoxy-D-xylulose 5-phosphate is bound by residues Gly-193, Ala-219–Gly-220, and Asn-241–Thr-242.

The protein belongs to the ThiG family. As to quaternary structure, homotetramer. Forms heterodimers with either ThiH or ThiS.

The protein localises to the cytoplasm. It catalyses the reaction [ThiS sulfur-carrier protein]-C-terminal-Gly-aminoethanethioate + 2-iminoacetate + 1-deoxy-D-xylulose 5-phosphate = [ThiS sulfur-carrier protein]-C-terminal Gly-Gly + 2-[(2R,5Z)-2-carboxy-4-methylthiazol-5(2H)-ylidene]ethyl phosphate + 2 H2O + H(+). It participates in cofactor biosynthesis; thiamine diphosphate biosynthesis. Its function is as follows. Catalyzes the rearrangement of 1-deoxy-D-xylulose 5-phosphate (DXP) to produce the thiazole phosphate moiety of thiamine. Sulfur is provided by the thiocarboxylate moiety of the carrier protein ThiS. In vitro, sulfur can be provided by H(2)S. This chain is Thiazole synthase, found in Rhodospirillum rubrum (strain ATCC 11170 / ATH 1.1.1 / DSM 467 / LMG 4362 / NCIMB 8255 / S1).